Consider the following 160-residue polypeptide: 3-hydroxyacyl-[acyl-carrier-protein] dehydratase FabZ (160 aa).

Residue H63 is part of the active site.

It belongs to the thioester dehydratase family. FabZ subfamily.

It localises to the cytoplasm. The enzyme catalyses a (3R)-hydroxyacyl-[ACP] = a (2E)-enoyl-[ACP] + H2O. Functionally, involved in unsaturated fatty acids biosynthesis. Catalyzes the dehydration of short chain beta-hydroxyacyl-ACPs and long chain saturated and unsaturated beta-hydroxyacyl-ACPs. The sequence is that of 3-hydroxyacyl-[acyl-carrier-protein] dehydratase FabZ from Xylella fastidiosa (strain 9a5c).